The sequence spans 199 residues: Probable nicotinate-nucleotide adenylyltransferase (199 aa).

It belongs to the NadD family.

The enzyme catalyses nicotinate beta-D-ribonucleotide + ATP + H(+) = deamido-NAD(+) + diphosphate. It participates in cofactor biosynthesis; NAD(+) biosynthesis; deamido-NAD(+) from nicotinate D-ribonucleotide: step 1/1. In terms of biological role, catalyzes the reversible adenylation of nicotinate mononucleotide (NaMN) to nicotinic acid adenine dinucleotide (NaAD). The polypeptide is Probable nicotinate-nucleotide adenylyltransferase (Roseobacter denitrificans (strain ATCC 33942 / OCh 114) (Erythrobacter sp. (strain OCh 114))).